Here is a 257-residue protein sequence, read N- to C-terminus: Transcription factor bHLH55 (257 aa).

The region spanning 74–126 (NKRAKHKELERQRRQENTSLFKILRYLLPSQYIKGKRSSADHVLEAVNYIKDL) is the bHLH domain.

In terms of assembly, homodimer. As to expression, expressed in roots, leaves, stems, and flowers.

It localises to the nucleus. This Arabidopsis thaliana (Mouse-ear cress) protein is Transcription factor bHLH55 (BHLH55).